Here is a 298-residue protein sequence, read N- to C-terminus: Acetyl-coenzyme A carboxylase carboxyl transferase subunit beta 1 (298 aa).

The 269-residue stretch at 26 to 294 (MWVKCPSCGD…RAADVQNAPA (269 aa)) folds into the CoA carboxyltransferase N-terminal domain. Residues cysteine 30, cysteine 33, cysteine 49, and cysteine 51 each coordinate Zn(2+). Residues 30 to 51 (CPSCGDLIYTRQFSDNLKVCKC) form a C4-type zinc finger.

This sequence belongs to the AccD/PCCB family. In terms of assembly, acetyl-CoA carboxylase is a heterohexamer composed of biotin carboxyl carrier protein (AccB), biotin carboxylase (AccC) and two subunits each of ACCase subunit alpha (AccA) and ACCase subunit beta (AccD). Zn(2+) is required as a cofactor.

The protein resides in the cytoplasm. It catalyses the reaction N(6)-carboxybiotinyl-L-lysyl-[protein] + acetyl-CoA = N(6)-biotinyl-L-lysyl-[protein] + malonyl-CoA. It functions in the pathway lipid metabolism; malonyl-CoA biosynthesis; malonyl-CoA from acetyl-CoA: step 1/1. Functionally, component of the acetyl coenzyme A carboxylase (ACC) complex. Biotin carboxylase (BC) catalyzes the carboxylation of biotin on its carrier protein (BCCP) and then the CO(2) group is transferred by the transcarboxylase to acetyl-CoA to form malonyl-CoA. This chain is Acetyl-coenzyme A carboxylase carboxyl transferase subunit beta 1, found in Roseiflexus castenholzii (strain DSM 13941 / HLO8).